Here is a 201-residue protein sequence, read N- to C-terminus: Imidazoleglycerol-phosphate dehydratase (201 aa).

The protein belongs to the imidazoleglycerol-phosphate dehydratase family.

It localises to the cytoplasm. It catalyses the reaction D-erythro-1-(imidazol-4-yl)glycerol 3-phosphate = 3-(imidazol-4-yl)-2-oxopropyl phosphate + H2O. Its pathway is amino-acid biosynthesis; L-histidine biosynthesis; L-histidine from 5-phospho-alpha-D-ribose 1-diphosphate: step 6/9. The sequence is that of Imidazoleglycerol-phosphate dehydratase from Prochlorococcus marinus (strain AS9601).